We begin with the raw amino-acid sequence, 335 residues long: Mycobacterial beta-ketoacyl-[acyl-carrier-protein] synthase III (335 aa).

Active-site residues include C122 and H258. Residues 259 to 263 (QANSR) are ACP-binding. N289 is an active-site residue.

Belongs to the thiolase-like superfamily. FabH family. Homodimer.

It localises to the cytoplasm. It catalyses the reaction malonyl-[ACP] + dodecanoyl-CoA + H(+) = 3-oxotetradecanoyl-[ACP] + CO2 + CoA. It participates in lipid metabolism; fatty acid biosynthesis. It functions in the pathway lipid metabolism; mycolic acid biosynthesis. Its function is as follows. Catalyzes the condensation reaction of fatty acid synthesis by the addition to an acyl acceptor of two carbons from malonyl-ACP. Catalyzes the first condensation reaction which initiates fatty acid synthesis and may therefore play a role in governing the total rate of fatty acid production. Possesses both acetoacetyl-ACP synthase and acetyl transacylase activities. Its substrate specificity determines the biosynthesis of branched-chain and/or straight-chain of fatty acids. The protein is Mycobacterial beta-ketoacyl-[acyl-carrier-protein] synthase III of Mycobacterium ulcerans (strain Agy99).